Reading from the N-terminus, the 520-residue chain is Laccase-2 (520 aa).

The signal sequence occupies residues 1-19 (MRFSNAFVLVAACISSVLA). Plastocyanin-like domains are found at residues 21–145 (TKTF…FVVY), 157–305 (VDDE…LTLA), and 375–488 (TVPV…FAEA). 2 residues coordinate Cu cation: His-82 and His-84. 2 disulfide bridges follow: Cys-103-Cys-509 and Cys-135-Cys-229. An N-linked (GlcNAc...) asparagine glycan is attached at Asn-108. His-127 and His-129 together coordinate Cu cation. N-linked (GlcNAc...) asparagine glycans are attached at residues Asn-241 and Asn-299. Cu cation-binding residues include His-417, His-420, His-422, His-470, Cys-471, His-472, and His-476. Asn-492 is a glycosylation site (N-linked (GlcNAc...) asparagine).

This sequence belongs to the multicopper oxidase family. Cu cation serves as cofactor.

Its subcellular location is the secreted. The enzyme catalyses 4 hydroquinone + O2 = 4 benzosemiquinone + 2 H2O. In terms of biological role, lignin degradation and detoxification of lignin-derived products. The protein is Laccase-2 (lcc2) of Agaricus bisporus (White button mushroom).